The chain runs to 689 residues: Beta-galactosidase BbgII (689 aa).

Positions 122 and 160 each coordinate substrate. Catalysis depends on Glu-161, which acts as the Proton donor. The Nucleophile role is filled by Glu-320. Substrate-binding positions include Trp-328 and 368–371 (EKWH).

This sequence belongs to the glycosyl hydrolase 42 family.

It catalyses the reaction Hydrolysis of terminal non-reducing beta-D-galactose residues in beta-D-galactosides.. The protein is Beta-galactosidase BbgII of Bifidobacterium bifidum (strain DSM 20082 / JCM 1254 / BCRC 11844 / KCTC 3440 / E319f (Variant a)).